A 311-amino-acid chain; its full sequence is 4-hydroxy-tetrahydrodipicolinate synthase (311 aa).

T51 lines the pyruvate pocket. The active-site Proton donor/acceptor is the Y140. K168 serves as the catalytic Schiff-base intermediate with substrate. I209 is a binding site for pyruvate.

Belongs to the DapA family. As to quaternary structure, homotetramer; dimer of dimers.

The protein resides in the cytoplasm. The enzyme catalyses L-aspartate 4-semialdehyde + pyruvate = (2S,4S)-4-hydroxy-2,3,4,5-tetrahydrodipicolinate + H2O + H(+). The protein operates within amino-acid biosynthesis; L-lysine biosynthesis via DAP pathway; (S)-tetrahydrodipicolinate from L-aspartate: step 3/4. Functionally, catalyzes the condensation of (S)-aspartate-beta-semialdehyde [(S)-ASA] and pyruvate to 4-hydroxy-tetrahydrodipicolinate (HTPA). This chain is 4-hydroxy-tetrahydrodipicolinate synthase, found in Streptococcus pneumoniae (strain 70585).